Here is a 306-residue protein sequence, read N- to C-terminus: Aspartate carbamoyltransferase catalytic subunit (306 aa).

Carbamoyl phosphate is bound by residues Arg54 and Thr55. L-aspartate is bound at residue Lys83. Arg104, His132, and Gln135 together coordinate carbamoyl phosphate. L-aspartate contacts are provided by Arg165 and Arg227. 2 residues coordinate carbamoyl phosphate: Leu266 and Pro267.

The protein belongs to the aspartate/ornithine carbamoyltransferase superfamily. ATCase family. Heterododecamer (2C3:3R2) of six catalytic PyrB chains organized as two trimers (C3), and six regulatory PyrI chains organized as three dimers (R2).

The catalysed reaction is carbamoyl phosphate + L-aspartate = N-carbamoyl-L-aspartate + phosphate + H(+). It participates in pyrimidine metabolism; UMP biosynthesis via de novo pathway; (S)-dihydroorotate from bicarbonate: step 2/3. Catalyzes the condensation of carbamoyl phosphate and aspartate to form carbamoyl aspartate and inorganic phosphate, the committed step in the de novo pyrimidine nucleotide biosynthesis pathway. This Finegoldia magna (strain ATCC 29328 / DSM 20472 / WAL 2508) (Peptostreptococcus magnus) protein is Aspartate carbamoyltransferase catalytic subunit.